The chain runs to 398 residues: L-glutamine--4-(methylsulfanyl)-2-oxobutanoate aminotransferase (398 aa).

K240 is modified (N6-(pyridoxal phosphate)lysine).

This sequence belongs to the class-I pyridoxal-phosphate-dependent aminotransferase family. MtnE subfamily. The cofactor is pyridoxal 5'-phosphate.

The catalysed reaction is 4-methylsulfanyl-2-oxobutanoate + L-glutamine = 2-oxoglutaramate + L-methionine. It functions in the pathway amino-acid biosynthesis; L-methionine biosynthesis via salvage pathway; L-methionine from S-methyl-5-thio-alpha-D-ribose 1-phosphate: step 6/6. Functionally, involved in the methylthioribose (MTR) recycling pathway. Catalyzes the formation of methionine from 2-keto-4-methylthiobutyrate (KMTB). This is L-glutamine--4-(methylsulfanyl)-2-oxobutanoate aminotransferase from Bacillus subtilis (strain 168).